The sequence spans 994 residues: Alpha-mannosidase F (994 aa).

The first 20 residues, 1-20 (MKNFYYFILILLFFNEVCYS), serve as a signal peptide directing secretion. Residues His-35, Asp-37, and Asp-151 each contribute to the Zn(2+) site. Catalysis depends on Asp-151, which acts as the Nucleophile. Residues Asn-247 and Asn-381 are each glycosylated (N-linked (GlcNAc...) asparagine). Zn(2+) is bound at residue His-392. 3 N-linked (GlcNAc...) asparagine glycosylation sites follow: Asn-554, Asn-712, and Asn-932.

It belongs to the glycosyl hydrolase 38 family. Requires Zn(2+) as cofactor.

The protein localises to the secreted. The catalysed reaction is Hydrolysis of terminal, non-reducing alpha-D-mannose residues in alpha-D-mannosides.. The polypeptide is Alpha-mannosidase F (manF) (Dictyostelium discoideum (Social amoeba)).